The chain runs to 431 residues: Glutamate-1-semialdehyde 2,1-aminomutase (431 aa).

Residue lysine 267 is modified to N6-(pyridoxal phosphate)lysine.

The protein belongs to the class-III pyridoxal-phosphate-dependent aminotransferase family. HemL subfamily. Homodimer. The cofactor is pyridoxal 5'-phosphate.

The protein localises to the cytoplasm. It carries out the reaction (S)-4-amino-5-oxopentanoate = 5-aminolevulinate. Its pathway is porphyrin-containing compound metabolism; protoporphyrin-IX biosynthesis; 5-aminolevulinate from L-glutamyl-tRNA(Glu): step 2/2. This Syntrophomonas wolfei subsp. wolfei (strain DSM 2245B / Goettingen) protein is Glutamate-1-semialdehyde 2,1-aminomutase.